We begin with the raw amino-acid sequence, 298 residues long: Protease HtpX (298 aa).

2 helical membrane passes run 4–24 (IGLF…TMNL) and 38–58 (LGNL…VSLA). His145 contacts Zn(2+). Glu146 is a catalytic residue. Zn(2+) is bound at residue His149. 2 consecutive transmembrane segments (helical) span residues 160–180 (LLQG…AYVV) and 194–214 (ITFI…ASMI). A Zn(2+)-binding site is contributed by Glu223.

Belongs to the peptidase M48B family. Requires Zn(2+) as cofactor.

The protein resides in the cell inner membrane. The sequence is that of Protease HtpX from Hydrogenovibrio crunogenus (strain DSM 25203 / XCL-2) (Thiomicrospira crunogena).